The primary structure comprises 167 residues: 3-isopropylmalate dehydratase small subunit (167 aa).

It belongs to the LeuD family. LeuD type 2 subfamily. As to quaternary structure, heterodimer of LeuC and LeuD.

It carries out the reaction (2R,3S)-3-isopropylmalate = (2S)-2-isopropylmalate. It participates in amino-acid biosynthesis; L-leucine biosynthesis; L-leucine from 3-methyl-2-oxobutanoate: step 2/4. Its function is as follows. Catalyzes the isomerization between 2-isopropylmalate and 3-isopropylmalate, via the formation of 2-isopropylmaleate. The protein is 3-isopropylmalate dehydratase small subunit of Nitratidesulfovibrio vulgaris (strain ATCC 29579 / DSM 644 / CCUG 34227 / NCIMB 8303 / VKM B-1760 / Hildenborough) (Desulfovibrio vulgaris).